Reading from the N-terminus, the 154-residue chain is MTTLYVDADACPVRAEAERVATRHRLRMAVVSNGGLRPSQNPLVETVIVPDGPDVADQWIAERAGRGDVVITADIPLAAKCVEAGARVLRHNGEAFTPANIGQQLAMRDLMADLRAANPLGAGGGGKPFSKADRARFLDALEREIRAAQRDAQG.

The protein belongs to the UPF0178 family.

In Ruegeria pomeroyi (strain ATCC 700808 / DSM 15171 / DSS-3) (Silicibacter pomeroyi), this protein is UPF0178 protein SPO3827.